Here is a 570-residue protein sequence, read N- to C-terminus: Peptidyl-prolyl cis-trans isomerase FKBP9 (570 aa).

The N-terminal stretch at 1-24 (MAFGARGWRRWSLLLLLLWVTGQA) is a signal peptide. PPIase FKBP-type domains follow at residues 54-142 (GDFV…VDIW), 166-254 (SDFV…LDLH), 278-365 (GDFL…IDFH), and 389-477 (GDYL…LELV). Asparagine 174, asparagine 286, asparagine 302, and asparagine 397 each carry an N-linked (GlcNAc...) asparagine glycan. 2 consecutive EF-hand domains span residues 488–523 (WNGEVSPNLFEEIDKDGNGEVLLEEFSEYIHAQVAS) and 533–568 (NAEMIVKNMFTNQDRNGDGKVTAEEFKLKDQETKHD). Ca(2+)-binding residues include aspartate 501, aspartate 503, asparagine 505, glutamate 507, glutamate 512, aspartate 546, asparagine 548, aspartate 550, lysine 552, and glutamate 557. The Prevents secretion from ER motif lies at 567-570 (HDEL).

In terms of processing, phosphorylated.

The protein localises to the endoplasmic reticulum lumen. The enzyme catalyses [protein]-peptidylproline (omega=180) = [protein]-peptidylproline (omega=0). With respect to regulation, inhibited by FK506. In terms of biological role, PPIases accelerate the folding of proteins during protein synthesis. This chain is Peptidyl-prolyl cis-trans isomerase FKBP9 (Fkbp9), found in Rattus norvegicus (Rat).